Consider the following 147-residue polypeptide: DNA polymerase epsilon subunit 3 (147 aa).

Ala-2 is subject to N-acetylalanine. Residue Thr-83 is modified to Phosphothreonine. Residues 85-146 are a coiled coil; that stretch reads LKEALEAYRR…EEQNEEEEVD (62 aa). The segment covering 93–124 has biased composition (basic and acidic residues); the sequence is RREQKGKKEASEQKKKDKDKKTDSEEQDKSRD. A disordered region spans residues 93-147; sequence RREQKGKKEASEQKKKDKDKKTDSEEQDKSRDEDNDEDEERLEEEEQNEEEEVDN. Position 122 is a phosphoserine (Ser-122). Residues 125–147 are compositionally biased toward acidic residues; sequence EDNDEDEERLEEEEQNEEEEVDN.

As to quaternary structure, component of the DNA polymerase epsilon complex consisting of four subunits: the catalytic subunit POLE and the accessory subunits POLE2, POLE3 and POLE4. Interaction with POLE4 is a prerequisite for further binding with POLE and POLE2. Heterodimer with CHRAC1; binds to DNA. Component of the CHRAC ISWI chromatin remodeling complex at least composed of SMARCA5/SNF2H, BAZ1A/ACF1, CHRAC1 and POLE3; the complex preferentially binds DNA through the CHRAC1-POLE3 heterodimer and possesses ATP-dependent nucleosome-remodeling activity. Within the complex, the heterodimer with CHRAC1 interacts with SMARCA5/SNF2H; the interaction is direct and enhances nucleosome sliding activity by the SMARCA5/SNF2H and BAZ1A/ACF1 interaction. Within the complex, the heterodimer with CHRAC1 interacts with BAZ1A/ACF1; the interactions are direct.

Its subcellular location is the nucleus. Functionally, accessory component of the DNA polymerase epsilon complex. Participates in DNA repair and in chromosomal DNA replication. Forms a complex with CHRAC1 and binds naked DNA, which is then incorporated into chromatin, aided by the nucleosome-remodeling activity of ISWI/SNF2H and ACF1. Does not enhance nucleosome sliding activity of the ACF-5 ISWI chromatin remodeling complex. This chain is DNA polymerase epsilon subunit 3 (POLE3), found in Bos taurus (Bovine).